The primary structure comprises 156 residues: MAAGRLRILCLLLLSLHPSLGWVLDLQEASVADKLSFGKMAETRGTWTPHQGNNHVRLPRALAGSCRLWSLTLPVAELGLGYASEEKVIFRYCAGSCPQEARTQHSLVLARLRGRGRAHGRPCCQPTSYADVTFLDDQHHWQQLPQLSAAACGCGG.

The signal sequence occupies residues 1-21 (MAAGRLRILCLLLLSLHPSLG). Intrachain disulfides connect Cys66/Cys124, Cys93/Cys152, and Cys97/Cys154.

This sequence belongs to the TGF-beta family. GDNF subfamily. Homodimer; disulfide-linked. Interacts with GFRA4 coreceptor and RET: forms a 2:2:2 ternary complex composed of PSPN ligand, GFRA4 and RET receptor.

It localises to the secreted. In terms of biological role, growth factor that exhibits neurotrophic activity on mesencephalic dopaminergic and motor neurons. Acts by binding to its coreceptor, GFRA4, leading to autophosphorylation and activation of the RET receptor. This chain is Persephin, found in Mus musculus (Mouse).